Here is a 215-residue protein sequence, read N- to C-terminus: MPSYTLHYFNHRGRAEICRMLFAAAGVQYNDRRIESSEWGSMRSKMPCSMMPMLELDNKIQIPQSMAMARYLAREFGFHGKNNMDMARVDYISDSFYDILDDYMRMYHDKDGRMMFSRSKDMNSSSEKRMRYQETCRRIFPYLEKTLEMRNGGNQFFMGDQITMADMMCFCALENPLMEDQNILRSYPKLQALRNRVINHPKMSAYLQKRSRTEF.

The GST N-terminal domain occupies 2 to 80 (PSYTLHYFNH…YLAREFGFHG (79 aa)). The 134-residue stretch at 82 to 215 (NNMDMARVDY…YLQKRSRTEF (134 aa)) folds into the GST C-terminal domain.

It belongs to the GST superfamily. As to expression, lens.

S-crystallins are structural components of squids and octopi eye lens. Contains relatively little if any GST activity. The protein is S-crystallin 4 of Enteroctopus dofleini (North Pacific giant octopus).